Here is a 169-residue protein sequence, read N- to C-terminus: Probable actin-related protein 2/3 complex subunit 4 (169 aa).

This sequence belongs to the ARPC4 family. Component of the Arp2/3 complex, at least composed of arx-1, arx-2, arx-4 and arx-6.

It is found in the cytoplasm. The protein localises to the cytoskeleton. In terms of biological role, functions as actin-binding component of the Arp2/3 complex which is involved in regulation of actin polymerization and together with an activating nucleation-promoting factor (NPF) mediates the formation of branched actin networks. Seems to contact the mother actin filament. Plays a role in time-dependent memory loss and the retention of conditioned behavior over time. In Caenorhabditis elegans, this protein is Probable actin-related protein 2/3 complex subunit 4.